Reading from the N-terminus, the 377-residue chain is cAMP-dependent protein kinase type II regulatory subunit (377 aa).

Residues 48–69 (ERPSVSHTDQSTDDQLSVNSQD) show a composition bias toward polar residues. A disordered region spans residues 48–78 (ERPSVSHTDQSTDDQLSVNSQDADAEPPVMA). Ser-51, Ser-58, Ser-64, Ser-67, and Ser-84 each carry phosphoserine. The Pseudophosphorylation motif signature appears at 81–85 (RRKSV). Tyr-90 carries the post-translational modification Phosphotyrosine. 3',5'-cyclic AMP-binding positions include 124-239 (LFRS…LLNS), Glu-189, Arg-198, 242-362 (MLKA…YESQ), Glu-311, and Arg-320.

Belongs to the cAMP-dependent kinase regulatory chain family. Tetramer, composed of 2 regulatory (R) and 2 catalytic (C) subunits. In the presence of cAMP it dissociates into 2 active monomeric C subunits and an R dimer. Interacts with Akap200. The pseudophosphorylation site binds to the substrate-binding region of the catalytic chain but is not phosphorylated. The physiological significance of phosphorylations by other kinases is unclear. As to expression, detected in follicle cells, germline-derived cells, germline line stem cells and outer rim of ring canals of nurse cells throughout oogenesis (at protein level).

It localises to the cytoplasm. The protein resides in the cell membrane. In terms of biological role, regulatory subunit of the cAMP-dependent protein kinases involved in cAMP signaling in cells. Mediates membrane association by binding to anchoring proteins, such as Akap200. Might play an essential role in the regulation of neuronal activity in the brain. The chain is cAMP-dependent protein kinase type II regulatory subunit (Pka-R2) from Drosophila melanogaster (Fruit fly).